A 256-amino-acid polypeptide reads, in one-letter code: MAFTLTNKNVIFVAGLGGIGLDTSKELVKRDLKNLVILDRIENPAAIAELKAINPKVTVTFYPYDVTVPIAETTKLLKTIFAKLTTVDVLINGAGILDDYQIERTIAVNYTGLVNTTTAILDFWDKRKGGPGGIICNIGSVTGFNAIYQVPVYSGTKAAVVNFTSSLAKLAPITGVTAYTVNPGITRTTLVHKFNSWLDVEPQVAEKLLAHPIQSSLACAENFVKAIELNENGAIWKLDLGTLEAIKWSKHWDSGI.

12–35 (FVAGLGGIGLDTSKELVKRDLKNL) is an NAD(+) binding site. Serine 140 contacts substrate. The active-site Proton acceptor is the tyrosine 153.

Belongs to the short-chain dehydrogenases/reductases (SDR) family. Homodimer.

It carries out the reaction a primary alcohol + NAD(+) = an aldehyde + NADH + H(+). It catalyses the reaction a secondary alcohol + NAD(+) = a ketone + NADH + H(+). The chain is Alcohol dehydrogenase (Adh) from Drosophila orena (Fruit fly).